A 194-amino-acid chain; its full sequence is Thymidylate kinase (194 aa).

An ATP-binding site is contributed by 7-14 (GVDCVGKS).

This sequence belongs to the thymidylate kinase family.

The enzyme catalyses dTMP + ATP = dTDP + ADP. Its function is as follows. Phosphorylation of dTMP to form dTDP in both de novo and salvage pathways of dTTP synthesis. The polypeptide is Thymidylate kinase (Campylobacter lari (strain RM2100 / D67 / ATCC BAA-1060)).